Consider the following 481-residue polypeptide: Keratin, type II cuticular Hb1 (481 aa).

Positions 1-106 (MTCGSGFCGR…PNAQCVKHEE (106 aa)) are head. The IF rod domain maps to 106–417 (EKEQIKCLNS…RLLEGEEQRL (312 aa)). The segment at 107-141 (KEQIKCLNSKFAAFIDKVRFLEQQNKLLETKWQFY) is coil 1A. The linker 1 stretch occupies residues 142 to 151 (QNRKCCESNM). A coil 1B region spans residues 152-252 (EPLFEGYIEA…YDEETRILHS (101 aa)). Lys-212 participates in a covalent cross-link: Glycyl lysine isopeptide (Lys-Gly) (interchain with G-Cter in SUMO1). Positions 253–269 (HISDTSIVVKMDNSRDL) are linker 12. The tract at residues 270–413 (NMDCVVAEIK…TTYRRLLEGE (144 aa)) is coil 2. A tail region spans residues 414-481 (EQRLCEGVGA…GSAVSCGRKC (68 aa)).

The protein belongs to the intermediate filament family. Heterotetramer of two type I and two type II keratins. Expressed in dorsal skin.

This Mus musculus (Mouse) protein is Keratin, type II cuticular Hb1.